Reading from the N-terminus, the 243-residue chain is E3 ubiquitin-protein ligase RMA3 (243 aa).

An RING-type zinc finger spans residues 44 to 92 (CNICLDTAHDPVVTLCGHLFCWPCIYKWLHVQLSSVSVDQHQNNCPVCK). Residues 110-135 (SPSSTFGSKKQDALSTDIPRRPAPSA) are disordered. The chain crosses the membrane as a helical; Anchor for type IV membrane protein span at residues 223 to 243 (KSLNRVSIFFLCCIILCLLLF).

In terms of tissue distribution, ubiquitous. Highly expressed in roots.

The protein localises to the endoplasmic reticulum membrane. It catalyses the reaction S-ubiquitinyl-[E2 ubiquitin-conjugating enzyme]-L-cysteine + [acceptor protein]-L-lysine = [E2 ubiquitin-conjugating enzyme]-L-cysteine + N(6)-ubiquitinyl-[acceptor protein]-L-lysine.. The protein operates within protein modification; protein ubiquitination. Functionally, E3 ubiquitin-protein ligase. In Arabidopsis thaliana (Mouse-ear cress), this protein is E3 ubiquitin-protein ligase RMA3 (RMA3).